The primary structure comprises 316 residues: L-lactate dehydrogenase (316 aa).

Residues V15, D36, R41, Y66, and 80–81 each bind NAD(+); that span reads GA. Residues Q83, R90, and 122 to 125 each bind substrate; that span reads NPVD. Residues 120 to 122 and T145 contribute to the NAD(+) site; that span reads ATN. 150 to 153 serves as a coordination point for substrate; sequence DTAR. Positions 155 and 170 each coordinate beta-D-fructose 1,6-bisphosphate. Catalysis depends on H177, which acts as the Proton acceptor. At Y222 the chain carries Phosphotyrosine. T231 is a binding site for substrate. Residues 287–316 are disordered; the sequence is DPGLSDEEREALRDSARALRDSRADLTVGT. Basic and acidic residues predominate over residues 296 to 310; sequence EALRDSARALRDSRA.

The protein belongs to the LDH/MDH superfamily. LDH family. In terms of assembly, homotetramer.

The protein localises to the cytoplasm. The enzyme catalyses (S)-lactate + NAD(+) = pyruvate + NADH + H(+). Its pathway is fermentation; pyruvate fermentation to lactate; (S)-lactate from pyruvate: step 1/1. Its activity is regulated as follows. Allosterically activated by fructose 1,6-bisphosphate (FBP). Its function is as follows. Catalyzes the conversion of lactate to pyruvate. This Salinibacter ruber (strain DSM 13855 / M31) protein is L-lactate dehydrogenase.